We begin with the raw amino-acid sequence, 213 residues long: Nicolin-1 (213 aa).

Part of the neuronal tubulin polyglutamylase complex which contains TPGS1, TPGS2, TTLL1, LRRC49 and NICN1. High expression level is found in brain, testis, liver and kidney. Weak expression in spleen, leukocytes, small intestine and colon.

The protein localises to the nucleus. This chain is Nicolin-1 (NICN1), found in Homo sapiens (Human).